The primary structure comprises 84 residues: Toxin CsE9 (84 aa).

A signal peptide spans 1–19 (MNSLLMITTCLILIGTVLA). Residues 20 to 83 (EDGYLFDKRK…ISRTPGKTCK (64 aa)) enclose the LCN-type CS-alpha/beta domain. 4 disulfides stabilise this stretch: Cys31-Cys82, Cys35-Cys58, Cys44-Cys63, and Cys48-Cys65.

The protein belongs to the long (4 C-C) scorpion toxin superfamily. Sodium channel inhibitor family. Beta subfamily. As to expression, expressed by the venom gland.

The protein localises to the secreted. Beta toxins bind voltage-independently at site-4 of sodium channels (Nav) and shift the voltage of activation toward more negative potentials thereby affecting sodium channel activation and promoting spontaneous and repetitive firing. This Centruroides sculpturatus (Arizona bark scorpion) protein is Toxin CsE9.